Consider the following 215-residue polypeptide: Cytochrome b6 (215 aa).

A helical membrane pass occupies residues 32 to 52 (IFYCLGGITLTCFLVQVATGF). Cys35 is a binding site for heme c. His86 and His100 together coordinate heme b. 3 helical membrane-spanning segments follow: residues 90–110 (ASMMVLMMILHVFRVYLTGGF), 116–136 (LTWVTGVVLAVLTASFGVTGY), and 186–206 (LHTFVLPLLTAVFMLMHFLMI). Residues His187 and His202 each contribute to the heme b site.

The protein belongs to the cytochrome b family. PetB subfamily. In terms of assembly, the 4 large subunits of the cytochrome b6-f complex are cytochrome b6, subunit IV (17 kDa polypeptide, PetD), cytochrome f and the Rieske protein, while the 4 small subunits are PetG, PetL, PetM and PetN. The complex functions as a dimer. Requires heme b as cofactor. Heme c is required as a cofactor.

The protein localises to the plastid. It is found in the chloroplast thylakoid membrane. In terms of biological role, component of the cytochrome b6-f complex, which mediates electron transfer between photosystem II (PSII) and photosystem I (PSI), cyclic electron flow around PSI, and state transitions. The sequence is that of Cytochrome b6 from Oenothera elata subsp. hookeri (Hooker's evening primrose).